The primary structure comprises 31 residues: Nemertide alpha-5 (31 aa).

3 disulfides stabilise this stretch: C2-C16, C9-C20, and C15-C26. A 4-hydroxyproline mark is found at P28 and P29.

This sequence belongs to the nemertide family. In terms of tissue distribution, confined to the epidermis and to the mucus layer.

It is found in the secreted. In terms of biological role, highly potent toxin against both insect and some mammalian sodium channels (Nav). It potently inhibits inactivation of insect sodium channels of B.germanica (BgNav1) (EC(50)=7.8 nM) and also delays the inactivation of mammalian Nav with potent activity on Nav1.3/SCN3A and Nav1.4/SCN4A (hNav1.1/SCN1A; EC(50)=102.1 nM, rNav1.2/SCN2A; EC(50)=156.1 nM, rNav1.3/SCN3A; EC(50)=9.4 nM, rNav1.4/SCN4A; EC(50)=15.4 nM, hNav1.5/SCN5A; EC(50)=132.7 nM, mNav1.6/SCN8A; EC(50)=66.9 nM, hNav1.9/SCN9A; EC(50)=73 nM). 1 uM is enough to completely inhibits the inactivation, resulting in sustained non-inactivating currents. In addition, the toxin significantly enhances the recovery from inactivation, and the open state is not required for the toxin to interact with the channel. In vivo, injection into brine shrimp (Artemia salina) stops movement or causes death after 24 hours (EC(50)=0.4 uM). The chain is Nemertide alpha-5 from Ramphogordius pseudolacteus (Ribbon worm).